Consider the following 127-residue polypeptide: Thioredoxin-3, mitochondrial (127 aa).

The N-terminal 21 residues, 1–21 (MLFYKPVMRMAVRPLKSIRFQ), are a transit peptide targeting the mitochondrion. One can recognise a Thioredoxin domain in the interval 22–127 (SSYTSITKLT…TALEKGIKDL (106 aa)). Catalysis depends on nucleophile residues cysteine 55 and cysteine 58. The cysteines at positions 55 and 58 are disulfide-linked.

Belongs to the thioredoxin family.

Its subcellular location is the mitochondrion. This is Thioredoxin-3, mitochondrial (TRX3) from Saccharomyces cerevisiae (strain ATCC 204508 / S288c) (Baker's yeast).